The sequence spans 309 residues: Glutaminase (309 aa).

Positions 64, 114, 160, 167, 191, 243, and 261 each coordinate substrate.

It belongs to the glutaminase family. Homotetramer.

It catalyses the reaction L-glutamine + H2O = L-glutamate + NH4(+). This chain is Glutaminase, found in Methylorubrum populi (strain ATCC BAA-705 / NCIMB 13946 / BJ001) (Methylobacterium populi).